Consider the following 49-residue polypeptide: Delta-actitoxin-Axm1b (49 aa).

Residues 1–7 form a well-structured region region; that stretch reads GVPCLCD. Cystine bridges form between cysteine 4–cysteine 46, cysteine 6–cysteine 36, and cysteine 29–cysteine 47. The segment at 8-17 is arg-14 loop (non-well-structured region); that stretch reads SDGPRPRGNT. The interval 18–49 is well-structured region; sequence LSGILWFYPSGCPSGWHNCKAHGPNIGWCCKK.

It belongs to the sea anemone sodium channel inhibitory toxin family. Type I subfamily.

It localises to the secreted. The protein resides in the nematocyst. Its function is as follows. Binds specifically to voltage-gated sodium channels (Nav) (site 3), thereby delaying their inactivation. This toxin has the highest affinity of all anemone toxins for the mammalian sodium channel, whereas its paralog Anthopleurin-A retains the greatest capacity to discriminate between cardiac (Nav1.5/SCN5A) and neuronal sodium channels. When tested electrophysiologically, this toxin exhibits a high affinity for multiple sodium channels with a 50-fold preference for rat cardiac (Nav1.5/SCN5A) over neuronal channels (0.1 nM versus 5 nM). When tested by ion flux, the affinities are similar and appear to have higher affinity (9 nM versus 22 nM). The residue Lys-37 of this toxin has been shown to interact with channel Nav1.5 (residue Asp-1612 in rat and Asp-1610 in human), which is located in the DIV S3-S4 linker (corresponding to channel site 3). Selectively modifies sodium channel inactivation from the open state with little effect on channel activation or on inactivation from closed states. Does not display phospholipid-binding activities, suggesting that the domain IV S3-S4 linker is located at the extracellular surface and not buried in the phospholipid bilayer. In Anthopleura xanthogrammica (Giant green sea anemone), this protein is Delta-actitoxin-Axm1b.